The sequence spans 164 residues: Kunitz-type trypsin inhibitor BrTI (164 aa).

The protein belongs to the leguminous Kunitz-type inhibitor family.

Functionally, inhibitor of trypsin and human plasma kallikrein with a Ki of 2.9 nM and 14.0 nM, respectively. Does not inhibit chymotrypsin, porcine pancreatic elastas, human neutrophil elastase, coagulation factor Xa, human thrombin, porcine pancreatic kallikrein or plasmin. The sequence is that of Kunitz-type trypsin inhibitor BrTI from Bauhinia rufa (Orchid tree).